The primary structure comprises 138 residues: Nucleoside diphosphate kinase (138 aa).

The ATP site is built by K12, Y60, R88, T94, R105, and N115. The active-site Pros-phosphohistidine intermediate is the H118.

The protein belongs to the NDK family. As to quaternary structure, homotetramer. Mg(2+) serves as cofactor.

It localises to the cytoplasm. It catalyses the reaction a 2'-deoxyribonucleoside 5'-diphosphate + ATP = a 2'-deoxyribonucleoside 5'-triphosphate + ADP. It carries out the reaction a ribonucleoside 5'-diphosphate + ATP = a ribonucleoside 5'-triphosphate + ADP. In terms of biological role, major role in the synthesis of nucleoside triphosphates other than ATP. The ATP gamma phosphate is transferred to the NDP beta phosphate via a ping-pong mechanism, using a phosphorylated active-site intermediate. This chain is Nucleoside diphosphate kinase, found in Cutibacterium acnes (strain DSM 16379 / KPA171202) (Propionibacterium acnes).